The chain runs to 254 residues: Winged helix repair factor 1 (254 aa).

The short motif at 4-21 (KRHHLIPETFGVKRRRKR) is the Bipartite nuclear localization signal element. Winged helix domain regions lie at residues 32 to 104 (EPGS…GIIF), 120 to 179 (PYAG…LAVP), and 180 to 254 (GAGR…LPET).

Belongs to the STK19 family. As to quaternary structure, monomer in solution. Homodimer; when bound to DNA. Component of a transcription-coupled nucleotide excision repair (TC-NER) complex composed of STK19, ERCC6, ERCC8, DDA1, DDB1, ELOF1 and UVSSA which assembles and interacts with the multiprotein RNA polymerase II complex when it stalls at DNA lesions. As to expression, monocytes, hepatocytes, epithelial cells, T- and B-lymphocytes.

The protein resides in the nucleus. It is found in the cytoplasm. Its function is as follows. DNA-binding protein which is required for efficient transcription-coupled nucleotide excision repair (TC-NER). Acts as part of a TC-NER complex which assembles and interacts with RNA polymerase II (RNAPII) when it stalls at DNA lesions. TC-NER complex subunit UVSSA binds to the GTF2H1/p62 subunit of the TFIIH transcription factor complex, tethering TFIIH to the TC-NER complex. WHR1/STK19 then interacts with the XPD helicase subunit of TFIIH which guides TFIIH to DNA downstream of the stalled RNAPII, ensuring DNA repair. Directly interacts with RNAPII and also binds to downstream DNA. Promotes the timely removal of DNA damage-stalled RNAPII, allowing downstream NER factors to access DNA lesions. Required for monoubiquitination of UVSSA. Regulates repositioning and stabilization of UVSSA within the TC-NER complex. Stimulates ubiquitination of RNAPII complex member RBP1. Also binds to RNA and regulates the expression levels of many mRNAs. The protein is Winged helix repair factor 1 of Homo sapiens (Human).